Here is a 406-residue protein sequence, read N- to C-terminus: Eukaryotic initiation factor 4A-I (406 aa).

Positions 1–21 (MSASQDSRSRDNGPDGMEPEG) are disordered. Ser2 is subject to N-acetylserine. Ser4 carries the phosphoserine modification. Residues 32 to 60 (DSFDDMNLSESLLRGIYAYGFEKPSAIQQ) carry the Q motif motif. Positions 63–234 (ILPCIKGYDV…KKFMRDPIRI (172 aa)) constitute a Helicase ATP-binding domain. 76-83 (AQSGTGKT) provides a ligand contact to ATP. Lys118 is subject to N6-acetyllysine. A Glycyl lysine isopeptide (Lys-Gly) (interchain with G-Cter in SUMO2) cross-link involves residue Lys146. Thr158 is modified (phosphothreonine). Lys174 is modified (N6-acetyllysine). The DEAD box signature appears at 182 to 185 (DEAD). An N6-acetyllysine modification is found at Lys193. A Glycyl lysine isopeptide (Lys-Gly) (interchain with G-Cter in SUMO2) cross-link involves residue Lys225. N6-acetyllysine; alternate is present on Lys238. Lys238 is covalently cross-linked (Glycyl lysine isopeptide (Lys-Gly) (interchain with G-Cter in SUMO2); alternate). The Helicase C-terminal domain occupies 245-406 (GIRQFYINVE…EMPLNVADLI (162 aa)). Glycyl lysine isopeptide (Lys-Gly) (interchain with G-Cter in SUMO2) cross-links involve residues Lys309, Lys369, and Lys381.

Belongs to the DEAD box helicase family. eIF4A subfamily. In terms of assembly, eIF4F is a multi-subunit complex, the composition of which varies with external and internal environmental conditions. It is composed of at least EIF4A, EIF4E and EIF4G1/EIF4G3. Interacts with PAIP1, EIF4E and UPF2. Found in a complex with XPO7, EIF4A1, ARHGAP1, VPS26A, VPS29, VPS35 and SFN. May interact with NOM1. Interacts with PDCD4; this interferes with the interaction between EIF4A and EIF4G. Interacts with RBM4. Interacts with DDX3X in an RNA-independent manner. Interacts with PKP1 (via N-terminus); the interaction promotes EIF4A1 recruitment to the cap-dependent translation complex and EIF4A1 ATPase activity.

It localises to the cytoplasm. The protein resides in the perinuclear region. The protein localises to the cell membrane. It is found in the stress granule. It carries out the reaction ATP + H2O = ADP + phosphate + H(+). Functionally, ATP-dependent RNA helicase which is a subunit of the eIF4F complex involved in cap recognition and is required for mRNA binding to ribosome. In the current model of translation initiation, eIF4A unwinds RNA secondary structures in the 5'-UTR of mRNAs which is necessary to allow efficient binding of the small ribosomal subunit, and subsequent scanning for the initiator codon. As a result, promotes cell proliferation and growth. This Bos taurus (Bovine) protein is Eukaryotic initiation factor 4A-I (EIF4A1).